We begin with the raw amino-acid sequence, 424 residues long: MAAGPISERNQDATVYVGGLDEKVSEPLLWELFLQAGPVVNTHMPKDRVTGQHQGYGFVEFLSEEDADYAIKIMNMIKLYGKPIRVNKASAHNKNLDVGANIFIGNLDPEIDEKLLYDTFSAFGVILQTPKIMRDPDTGNSKGYAFINFASFDASDAAIEAMNGQYLCNRPITVSYAFKKDSKGERHGSAAERLLAAQNPLSQADRPHQLFADAPPPPSAPNPVVSSLGSGLPPPGMPPPGSFPPPVPPPGALPPGIPPAMPPPPMPPGAAGHGPPSAGTPGAGHPGHGHSHPHPFPPGGMPHPGMSQMQLAHHGPHGLGHPHAGPPGSGGQPPPRPPPGMPHPGPPPMGMPPRGPPFGSPMGHPGPMPPHGMRGPPPLMPPHGYTGPPRPPPYGYQRGPLPPPRPTPRPPVPPRGPLRGPLPQ.

Ala2 is modified (N-acetylalanine). RRM domains lie at 13-91 and 100-179; these read ATVY…KASA and ANIF…YAFK. Position 56 is a phosphotyrosine (Tyr56). The segment at 207 to 424 is disordered; the sequence is PHQLFADAPP…RGPLRGPLPQ (218 aa). Over residues 222–231 the composition is skewed to low complexity; sequence NPVVSSLGSG. The segment covering 232 to 268 has biased composition (pro residues); that stretch reads LPPPGMPPPGSFPPPVPPPGALPPGIPPAMPPPPMPP. Composition is skewed to low complexity over residues 269–280 and 303–323; these read GAAGHGPPSAGT and HPGM…GHPH. Pro residues-rich tracts occupy residues 332–381 and 388–424; these read QPPP…PLMP and PPRP…PLPQ.

Belongs to the SF3B4 family. In terms of assembly, component of the 17S U2 SnRNP complex, a ribonucleoprotein complex that contains small nuclear RNA (snRNA) U2 and a number of specific proteins. Part of the SF3B subcomplex of the 17S U2 SnRNP complex. SF3B associates with the splicing subcomplex SF3A and a 12S RNA unit to form the U2 small nuclear ribonucleoproteins complex (U2 snRNP). SF3B4 has been found in complex spliceosome 'B' and 'C' as well. Component of the minor (U12-type spliceosome) spliceosome. Found in a complex with PRMT9, SF3B2 and SF3B4.

The protein resides in the nucleus. Component of the 17S U2 SnRNP complex of the spliceosome, a large ribonucleoprotein complex that removes introns from transcribed pre-mRNAs. The 17S U2 SnRNP complex (1) directly participates in early spliceosome assembly and (2) mediates recognition of the intron branch site during pre-mRNA splicing by promoting the selection of the pre-mRNA branch-site adenosine, the nucleophile for the first step of splicing. Within the 17S U2 SnRNP complex, SF3B4 is part of the SF3B subcomplex, which is required for 'A' complex assembly formed by the stable binding of U2 snRNP to the branchpoint sequence in pre-mRNA. Sequence independent binding of SF3A and SF3B subcomplexes upstream of the branch site is essential, it may anchor U2 snRNP to the pre-mRNA. May also be involved in the assembly of the 'E' complex. Also acts as a component of the minor spliceosome, which is involved in the splicing of U12-type introns in pre-mRNAs. The polypeptide is Splicing factor 3B subunit 4 (SF3B4) (Homo sapiens (Human)).